The chain runs to 363 residues: NAD(P)H-quinone oxidoreductase subunit 1, chloroplastic (363 aa).

8 helical membrane-spanning segments follow: residues 30-50 (LVPIVTLVLGITIGVLVIVWL), 98-118 (FSIGPSIAVISIFLSYSVIPF), 127-147 (LSIGVFFWIAISSIAPVGLLM), 165-185 (AAQSISYEIPLALCVLSISLL), 203-223 (FWGWNLWRQPIGFIVFLISSL), 248-268 (YSGIKFGLFYIASYLNLLVSS), 300-320 (VFGTLIGIFITLAKTYLFLFI), and 336-356 (LLNLGWKFLLPISLGNLLLTT).

The protein belongs to the complex I subunit 1 family. In terms of assembly, NDH is composed of at least 16 different subunits, 5 of which are encoded in the nucleus.

The protein resides in the plastid. It is found in the chloroplast thylakoid membrane. It carries out the reaction a plastoquinone + NADH + (n+1) H(+)(in) = a plastoquinol + NAD(+) + n H(+)(out). The catalysed reaction is a plastoquinone + NADPH + (n+1) H(+)(in) = a plastoquinol + NADP(+) + n H(+)(out). Functionally, NDH shuttles electrons from NAD(P)H:plastoquinone, via FMN and iron-sulfur (Fe-S) centers, to quinones in the photosynthetic chain and possibly in a chloroplast respiratory chain. The immediate electron acceptor for the enzyme in this species is believed to be plastoquinone. Couples the redox reaction to proton translocation, and thus conserves the redox energy in a proton gradient. The protein is NAD(P)H-quinone oxidoreductase subunit 1, chloroplastic of Solanum lycopersicum (Tomato).